The primary structure comprises 739 residues: Adenosylcobalamin-dependent ribonucleoside-triphosphate reductase (739 aa).

A disulfide bridge connects residues C119 and C419. The segment at 147 to 158 (SMPFSFLFDELM) is effector region-1. The interval 168–313 (ARSNISQIPR…ICNLIGKAVV (146 aa)) is effector region-2. Active-site residues include C408 and E410. Positions 565–626 (FHYGAYLIQR…NPNFASAGTV (62 aa)) are adenosylcobalamin-binding-1. An adenosylcobalamin-binding-2 region spans residues 685 to 724 (LQQAPKEPIDKETYEKRSQEITGNVEEVFSQLNSDVKDLE).

This sequence belongs to the class II ribonucleoside-triphosphate reductase family. Monomer. Adenosylcob(III)alamin is required as a cofactor.

The enzyme catalyses a 2'-deoxyribonucleoside 5'-triphosphate + [thioredoxin]-disulfide + H2O = a ribonucleoside 5'-triphosphate + [thioredoxin]-dithiol. Its activity is regulated as follows. Allosterically regulated by ATP and dNTP. The polypeptide is Adenosylcobalamin-dependent ribonucleoside-triphosphate reductase (rtpR) (Lactobacillus leichmannii).